We begin with the raw amino-acid sequence, 216 residues long: Uracil phosphoribosyltransferase (216 aa).

5-phospho-alpha-D-ribose 1-diphosphate contacts are provided by residues R85, R110, and 135–143 (DPMVATGYS). Residues I200 and 205-207 (GDA) contribute to the uracil site. D206 provides a ligand contact to 5-phospho-alpha-D-ribose 1-diphosphate.

Belongs to the UPRTase family. Mg(2+) is required as a cofactor.

It carries out the reaction UMP + diphosphate = 5-phospho-alpha-D-ribose 1-diphosphate + uracil. It participates in pyrimidine metabolism; UMP biosynthesis via salvage pathway; UMP from uracil: step 1/1. With respect to regulation, allosterically activated by GTP. Functionally, catalyzes the conversion of uracil and 5-phospho-alpha-D-ribose 1-diphosphate (PRPP) to UMP and diphosphate. The polypeptide is Uracil phosphoribosyltransferase (Burkholderia pseudomallei (strain 668)).